Here is an 844-residue protein sequence, read N- to C-terminus: MSGESDQPQPGPSHAGLYLEHRERDQAGVPGGVIRRAGSQRHRSWIQTVIEQITGSPRQCVTLSEVVPVSVLAVQRYLLEDEPRDTVPKPPLYCYDVTISDGVYQEKCYLDPSLNFLVYQNILKVGIEMRISRVSCLYNEKRLGQGILCIDKVHCGEPLDVISVETPFRNRAHEEKPERPLRGSKSHYLALWNNEDPYGDIWKTNKQPEEFNFNNTKIISLSHLEMTWHNRKNFPALLVRILHKSKLRYYGKPNKKMIEPYQTYLEVADSSGMVSVIMWNALCPEWYKSLRVGLILLLQDYSVKKSYPLRIQPDPVDPQMKLISTMEICLNLRDPPTNIVIIPEKQLKSEWKLPKLINRFITRSELDDMPENSICDVIGMLSFVGRVQRSKKKENSEDFWSYRWIHITDGTSEQPFIVQLFSTSQPEVFENIYPMTYFVCTQLKVVRNNSQVPKLLYLTTTNESRVLITGHRGQPYTYDTKAKKIIQWIKTKTNLEAKNTVIGGYYPYPPVPETFSKYSRFIKAESLLTTISEVRKVIEDLQYREQKRIAIQGIITAIKYIPYNHSAKSAPASETLQNASPPSTSQAAAKEGHYHERGSKRSQDDRPMDSLPMVLSLCAKRKILQGPTANPVPVPQPHSSAQMKGNKPNIPSRENSTANATGKSKRIINDRWESQLWRDKKFSLRDHLHYGHVDPESIPRKFILGHEKFLTQQFNSQPAKYVPPEGKPPKLDEFQSARSLGHFEVTILGLNHEIAIDVAFLPMYSPEDVETSQIDTFLTCMNYSCVYPPAAPVSGRVPDPKAVAGDIVKAAADLDRVHIIGILDICNLGNNKVEVCLQKIYTPE.

Residues 228 to 331 (WHNRKNFPAL…LISTMEICLN (104 aa)) constitute a DNA-binding region (OB). Disordered stretches follow at residues 571-609 (PASETLQNASPPSTSQAAAKEGHYHERGSKRSQDDRPMD) and 626-664 (GPTANPVPVPQPHSSAQMKGNKPNIPSRENSTANATGKS). Residues 572 to 587 (ASETLQNASPPSTSQA) are compositionally biased toward polar residues. Basic and acidic residues predominate over residues 590–608 (KEGHYHERGSKRSQDDRPM). A compositionally biased stretch (polar residues) spans 652–662 (SRENSTANATG).

Its subcellular location is the chromosome. In terms of biological role, single-stranded DNA-binding protein recruited to replication forks to maintain genome stability. Prevents fork collapse by antagonizing the accumulation of RAD51 at forks to ensure the proper balance of fork remodeling and protection without interfering with the capacity of cells to complete homologous recombination of double-strand breaks. The chain is RPA-related protein RADX from Rattus norvegicus (Rat).